The chain runs to 306 residues: Phosphoadenosine phosphosulfate reductase (306 aa).

Disordered regions lie at residues 1–30 (MPAK…VSGG) and 245–266 (YHST…KGQA).

This sequence belongs to the PAPS reductase family. CysH subfamily.

The enzyme catalyses [thioredoxin]-disulfide + sulfite + adenosine 3',5'-bisphosphate + 2 H(+) = [thioredoxin]-dithiol + 3'-phosphoadenylyl sulfate. It participates in sulfur metabolism; hydrogen sulfide biosynthesis; sulfite from sulfate: step 3/3. Its function is as follows. The NADP dependent reduction of PAPS into sulfite involves thioredoxin which probably plays the role of a thiol carrier. This is Phosphoadenosine phosphosulfate reductase (sA) from Emericella nidulans (strain FGSC A4 / ATCC 38163 / CBS 112.46 / NRRL 194 / M139) (Aspergillus nidulans).